Consider the following 448-residue polypeptide: Probable tryptophanase (448 aa).

Position 253 is an N6-(pyridoxal phosphate)lysine (Lys253).

It belongs to the beta-eliminating lyase family. Requires pyridoxal 5'-phosphate as cofactor.

The catalysed reaction is L-tryptophan + H2O = indole + pyruvate + NH4(+). Its pathway is amino-acid degradation; L-tryptophan degradation via pyruvate pathway; indole and pyruvate from L-tryptophan: step 1/1. The chain is Probable tryptophanase from Halobacterium salinarum (strain ATCC 29341 / DSM 671 / R1).